A 122-amino-acid chain; its full sequence is Ribonuclease P protein component (122 aa).

It belongs to the RnpA family. In terms of assembly, consists of a catalytic RNA component (M1 or rnpB) and a protein subunit.

The enzyme catalyses Endonucleolytic cleavage of RNA, removing 5'-extranucleotides from tRNA precursor.. Functionally, RNaseP catalyzes the removal of the 5'-leader sequence from pre-tRNA to produce the mature 5'-terminus. It can also cleave other RNA substrates such as 4.5S RNA. The protein component plays an auxiliary but essential role in vivo by binding to the 5'-leader sequence and broadening the substrate specificity of the ribozyme. The chain is Ribonuclease P protein component from Lactobacillus helveticus (strain DPC 4571).